A 325-amino-acid chain; its full sequence is DNA repair and recombination protein RadA (325 aa).

Residue 107–114 (GEFGSGKT) coordinates ATP.

This sequence belongs to the eukaryotic RecA-like protein family.

Functionally, involved in DNA repair and in homologous recombination. Binds and assemble on single-stranded DNA to form a nucleoprotein filament. Hydrolyzes ATP in a ssDNA-dependent manner and promotes DNA strand exchange between homologous DNA molecules. The protein is DNA repair and recombination protein RadA of Methanosarcina barkeri (strain Fusaro / DSM 804).